Here is a 112-residue protein sequence, read N- to C-terminus: Citrate synthase (112 aa).

Active-site residues include His39 and Asp97.

Belongs to the citrate synthase family.

It catalyses the reaction oxaloacetate + acetyl-CoA + H2O = citrate + CoA + H(+). The protein operates within carbohydrate metabolism; tricarboxylic acid cycle; isocitrate from oxaloacetate: step 1/2. This is Citrate synthase (gltA) from Bartonella vinsonii subsp. berkhoffii.